Here is a 239-residue protein sequence, read N- to C-terminus: 1-(5-phosphoribosyl)-5-[(5-phosphoribosylamino)methylideneamino] imidazole-4-carboxamide isomerase (239 aa).

Catalysis depends on aspartate 8, which acts as the Proton acceptor. The active-site Proton donor is the aspartate 129.

It belongs to the HisA/HisF family.

It localises to the cytoplasm. The catalysed reaction is 1-(5-phospho-beta-D-ribosyl)-5-[(5-phospho-beta-D-ribosylamino)methylideneamino]imidazole-4-carboxamide = 5-[(5-phospho-1-deoxy-D-ribulos-1-ylimino)methylamino]-1-(5-phospho-beta-D-ribosyl)imidazole-4-carboxamide. The protein operates within amino-acid biosynthesis; L-histidine biosynthesis; L-histidine from 5-phospho-alpha-D-ribose 1-diphosphate: step 4/9. The polypeptide is 1-(5-phosphoribosyl)-5-[(5-phosphoribosylamino)methylideneamino] imidazole-4-carboxamide isomerase (Bacillus cereus (strain AH820)).